A 450-amino-acid chain; its full sequence is Putative serine/threonine-protein kinase R517/R518 (450 aa).

The region spanning 9 to 290 (KMTDTVLGKG…WSELFHHYWF (282 aa)) is the Protein kinase domain. Residues 15-23 (LGKGGFSEV) and Lys-38 contribute to the ATP site. Asp-140 acts as the Proton acceptor in catalysis.

It belongs to the protein kinase superfamily. Ser/Thr protein kinase family.

It catalyses the reaction L-seryl-[protein] + ATP = O-phospho-L-seryl-[protein] + ADP + H(+). It carries out the reaction L-threonyl-[protein] + ATP = O-phospho-L-threonyl-[protein] + ADP + H(+). This Acanthamoeba polyphaga mimivirus (APMV) protein is Putative serine/threonine-protein kinase R517/R518.